The following is a 1185-amino-acid chain: Calmodulin-binding transcription activator homolog 1 (1185 aa).

Positions 72-200 (AVELFPCFKD…YLNVKTNNKI (129 aa)) form a DNA-binding region, CG-1. Disordered stretches follow at residues 252–277 (GVNLPTSPLPQEPSSSTSRELERRNS) and 390–411 (KIRSGSQESPMGPPSSSSVTST). Residues 393–411 (SGSQESPMGPPSSSSVTST) are compositionally biased toward low complexity. One can recognise an IPT/TIG domain in the interval 418–498 (EMTPSSSSLK…ISTASEFTYE (81 aa)). An ANK repeat occupies 616-646 (DGSTPLHTACKNSASRIARLIISIDSSAIDV). The region spanning 957 to 984 (EAAMVIQRAYRVYRARSTTRRQEDIERR) is the IQ domain. Residues 1121–1185 (CPQTSGDQRN…KPPYGCGTLA (65 aa)) are disordered. Basic and acidic residues predominate over residues 1128–1147 (QRNKRDSDGERKRDAHHDAP).

This sequence belongs to the CAMTA family. May interact with calmodulin. As to expression, expressed broadly in the nervous system.

It is found in the nucleus. Functionally, transcription factor. Positively modulates neuronal levels of the ubiquitous Ca2+ sensor calmodulin/cmd-1, probably by direct binding to the cmd-1 promoter, thereby regulating Ca2+ signaling, physiology, and behavior. The chain is Calmodulin-binding transcription activator homolog 1 from Caenorhabditis elegans.